A 125-amino-acid chain; its full sequence is SOSS complex subunit C homolog B (125 aa).

Disordered stretches follow at residues 44–73 (PAPQLLGQPTTTTATPDLVSTNSTPPRAAF) and 105–125 (PATPSTTTPPITPIANANNPK).

The protein belongs to the SOSS-C family.

The protein is SOSS complex subunit C homolog B of Drosophila willistoni (Fruit fly).